The sequence spans 465 residues: Ribulose bisphosphate carboxylase large chain (465 aa).

N6,N6,N6-trimethyllysine is present on K4. N113 and T163 together coordinate substrate. K165 acts as the Proton acceptor in catalysis. K167 contributes to the substrate binding site. Positions 191, 193, and 194 each coordinate Mg(2+). K191 carries the N6-carboxylysine modification. The active-site Proton acceptor is H284. The substrate site is built by R285, H317, and S369.

The protein belongs to the RuBisCO large chain family. Type I subfamily. In terms of assembly, heterohexadecamer of 8 large chains and 8 small chains; disulfide-linked. The disulfide link is formed within the large subunit homodimers. The cofactor is Mg(2+). In terms of processing, the disulfide bond which can form in the large chain dimeric partners within the hexadecamer appears to be associated with oxidative stress and protein turnover.

It localises to the plastid. The protein localises to the chloroplast. It carries out the reaction 2 (2R)-3-phosphoglycerate + 2 H(+) = D-ribulose 1,5-bisphosphate + CO2 + H2O. It catalyses the reaction D-ribulose 1,5-bisphosphate + O2 = 2-phosphoglycolate + (2R)-3-phosphoglycerate + 2 H(+). In terms of biological role, ruBisCO catalyzes two reactions: the carboxylation of D-ribulose 1,5-bisphosphate, the primary event in carbon dioxide fixation, as well as the oxidative fragmentation of the pentose substrate in the photorespiration process. Both reactions occur simultaneously and in competition at the same active site. The sequence is that of Ribulose bisphosphate carboxylase large chain from Ailanthus altissima (Tree-of-heaven).